Reading from the N-terminus, the 90-residue chain is UPF0367 protein P9301_01411 (90 aa).

It belongs to the UPF0367 family.

This chain is UPF0367 protein P9301_01411, found in Prochlorococcus marinus (strain MIT 9301).